A 256-amino-acid chain; its full sequence is Pyrroloquinoline-quinone synthase (256 aa).

It belongs to the PqqC family.

It catalyses the reaction 6-(2-amino-2-carboxyethyl)-7,8-dioxo-1,2,3,4,7,8-hexahydroquinoline-2,4-dicarboxylate + 3 O2 = pyrroloquinoline quinone + 2 H2O2 + 2 H2O + H(+). The protein operates within cofactor biosynthesis; pyrroloquinoline quinone biosynthesis. Ring cyclization and eight-electron oxidation of 3a-(2-amino-2-carboxyethyl)-4,5-dioxo-4,5,6,7,8,9-hexahydroquinoline-7,9-dicarboxylic-acid to PQQ. The sequence is that of Pyrroloquinoline-quinone synthase from Rhizobium meliloti (strain 1021) (Ensifer meliloti).